The primary structure comprises 270 residues: Putative phosphoenolpyruvate synthase regulatory protein (270 aa).

150–157 (GVSRCGKT) provides a ligand contact to ADP.

Belongs to the pyruvate, phosphate/water dikinase regulatory protein family. PSRP subfamily.

The enzyme catalyses [pyruvate, water dikinase] + ADP = [pyruvate, water dikinase]-phosphate + AMP + H(+). The catalysed reaction is [pyruvate, water dikinase]-phosphate + phosphate + H(+) = [pyruvate, water dikinase] + diphosphate. In terms of biological role, bifunctional serine/threonine kinase and phosphorylase involved in the regulation of the phosphoenolpyruvate synthase (PEPS) by catalyzing its phosphorylation/dephosphorylation. The sequence is that of Putative phosphoenolpyruvate synthase regulatory protein from Shewanella amazonensis (strain ATCC BAA-1098 / SB2B).